Reading from the N-terminus, the 828-residue chain is MQDRNLIDVNLTSEMKTSFIDYAMSVIVARALPDVRDGLKPVHRRILYGMNELGVTPDKPHKKSARITGDVMGKYHPHGDSSIYEAMVRMAQWWSYRHMLVDGHGNFGSMDGDGAAAQRYTEARMSKIALELLRDINKNTVNFQDNYDGSEREPVVLPARFPNLLVNGATGIAVGMATNIPPHNLAESIDAVKMVMEHPDCTTRELMEVIPGPDFPTGALVMGRSGIHRAYDTGKGSIVLRSRTEIETTQTGRERIVVTEFPYGVNKTKVHEHIVRLAQEKRLEGITAVRDESSREGVRFVIEIRREASATVILNNLFKLTSLQTNFSFNMLAIENGVPKILSLRQIIDNYISHQKEVIIRRTRFDKDKAEARAHILEGLLIALDHLDEVIAIIRNSETDVIAQTELMSRFDLSERQSQAILDMRLRRLTGLERDKIQSEYDDLLALIADLSDILAKPERIITIIKEEMDEIKRKYANPRRTELMVGEVLSLEDEDLIEEEDVLITLSNKGYIKRLAQDEFRAQKRGGRGVQGTGVNNDDFVRELVSTSTHDTLLFFTNFGRVYRLKAYEIPEYGRTAKGLPIVNLLKLEDGETIQTIINARKEETAGKSFFFTTKQGIVKRTEVSEFNNIRQNGLRALKLKEGDQLINVLLTSGQDDIIIGTHSGYSVRFNEASIRNMGRSATGVRGVKLREDDRVVGASRIQDNQEVLVITENGFGKRTSATDYPTKGRGGKGIKTANITPKNGQLAGLVTVDGTEDIMVITNKGVIIRTNVANISQTGRATLGVKIMKLDADAKIVTFTLVQPEDSSIAEINTDRENSISKNKDN.

The Topo IIA-type catalytic domain occupies 32–497; sequence LPDVRDGLKP…EVLSLEDEDL (466 aa). Tyr-120 (O-(5'-phospho-DNA)-tyrosine intermediate) is an active-site residue. A GyrA-box motif is present at residues 524–530; that stretch reads QKRGGRG.

Belongs to the type II topoisomerase GyrA/ParC subunit family. In terms of assembly, heterotetramer, composed of two GyrA and two GyrB chains. In the heterotetramer, GyrA contains the active site tyrosine that forms a transient covalent intermediate with DNA, while GyrB binds cofactors and catalyzes ATP hydrolysis.

The protein resides in the cytoplasm. The enzyme catalyses ATP-dependent breakage, passage and rejoining of double-stranded DNA.. A type II topoisomerase that negatively supercoils closed circular double-stranded (ds) DNA in an ATP-dependent manner to modulate DNA topology and maintain chromosomes in an underwound state. Negative supercoiling favors strand separation, and DNA replication, transcription, recombination and repair, all of which involve strand separation. Also able to catalyze the interconversion of other topological isomers of dsDNA rings, including catenanes and knotted rings. Type II topoisomerases break and join 2 DNA strands simultaneously in an ATP-dependent manner. The sequence is that of DNA gyrase subunit A from Streptococcus pyogenes serotype M3 (strain ATCC BAA-595 / MGAS315).